The primary structure comprises 292 residues: Tissue factor (292 aa).

Positions 1–35 (MATPNGPRVPCPQAAVARALLFGLVLIQGAGVAGT) are cleaved as a signal peptide. At 36 to 248 (TDVVVAYNIT…TSHEKVLSTE (213 aa)) the chain is on the extracellular side. The N-linked (GlcNAc...) asparagine glycan is linked to asparagine 43. The WKS motif signature appears at 46–48 (WKS). Cysteine 81 and cysteine 89 are oxidised to a cystine. 2 N-linked (GlcNAc...) asparagine glycosylation sites follow: asparagine 153 and asparagine 181. Cysteines 215 and 238 form a disulfide. A helical membrane pass occupies residues 249-271 (LFFIIGTVMLVIIIFIVVLSVSL). Residues 272–292 (HKCRKVRAERSGKENTPLNAA) are Cytoplasmic-facing. Cysteine 274 is lipidated: S-palmitoyl cysteine.

Belongs to the tissue factor family. Interacts with HSPE; the interaction, inhibited by heparin, promotes the generation of activated factor X and activates coagulation in the presence of activated factor VII.

It is found in the membrane. Functionally, initiates blood coagulation by forming a complex with circulating factor VII or VIIa. The [TF:VIIa] complex activates factors IX or X by specific limited proteolysis. TF plays a role in normal hemostasis by initiating the cell-surface assembly and propagation of the coagulation protease cascade. The chain is Tissue factor (F3) from Bos taurus (Bovine).